The primary structure comprises 264 residues: Signal peptidase I (264 aa).

Residues 1–18 (MNRDNINSNKTVKQEFGS) are Cytoplasmic-facing. A helical membrane pass occupies residues 19–39 (FAFVICIALVIRILIMEPFTV). Topologically, residues 40 to 264 (PTGSMKATIL…IFKNLYNVDE (225 aa)) are extracellular. Catalysis depends on residues Ser43 and Lys106.

It belongs to the peptidase S26 family.

The protein localises to the cell membrane. The catalysed reaction is Cleavage of hydrophobic, N-terminal signal or leader sequences from secreted and periplasmic proteins.. This chain is Signal peptidase I (lepB), found in Rickettsia prowazekii (strain Madrid E).